Here is a 906-residue protein sequence, read N- to C-terminus: Coatomer subunit beta' (906 aa).

6 WD repeats span residues 13 to 52, 55 to 94, 97 to 136, 140 to 180, 183 to 224, and 227 to 266; these read ARSDRVKSVDLHPTEPWMLASLYNGSVCVWNHETQTLVKT, VCDLPVRAAKFVARKNWVVTGADDMQIRVFNYNTLERVHM, AHSDYIRCIAVHPTQPFILTSSDDMLIKLWDWDKKWSCSQ, GHTH…PNFT, GHEK…CVQT, and GHAQNVSCASFHPELPIIITGSEDGTVRIWHSSTYRLEST. Lysine 627 carries the post-translational modification N6-acetyllysine. Residues 837 to 870 form a disordered region; that stretch reads EEGKDFQPSRSTAQQELDGKPASPTPVIVASHTA. Serine 859 is subject to Phosphoserine. Threonine 861 is modified (phosphothreonine). A coiled-coil region spans residues 866 to 891; sequence ASHTANKEEKSLLELEVDLDNLELED.

It belongs to the WD repeat COPB2 family. In terms of assembly, oligomeric complex that consists of at least the alpha, beta, beta', gamma, delta, epsilon and zeta subunits. Probably interacts with PEX11A. Interacts with SCYL1. Interacts with JAGN1.

It localises to the cytoplasm. The protein resides in the cytosol. Its subcellular location is the golgi apparatus membrane. It is found in the cytoplasmic vesicle. The protein localises to the COPI-coated vesicle membrane. Functionally, the coatomer is a cytosolic protein complex that binds to dilysine motifs and reversibly associates with Golgi non-clathrin-coated vesicles, which further mediate biosynthetic protein transport from the ER, via the Golgi up to the trans Golgi network. Coatomer complex is required for budding from Golgi membranes, and is essential for the retrograde Golgi-to-ER transport of dilysine-tagged proteins. In mammals, the coatomer can only be recruited by membranes associated to ADP-ribosylation factors (ARFs), which are small GTP-binding proteins; the complex also influences the Golgi structural integrity, as well as the processing, activity, and endocytic recycling of LDL receptors. In terms of biological role, this coatomer complex protein, essential for Golgi budding and vesicular trafficking, is a selective binding protein (RACK) for protein kinase C, epsilon type. It binds to Golgi membranes in a GTP-dependent manner. The chain is Coatomer subunit beta' (COPB2) from Homo sapiens (Human).